A 335-amino-acid polypeptide reads, in one-letter code: Ig gamma-2A chain C region secreted form (335 aa).

Ig-like domains lie at 6 to 98 (PSVY…KKIE), 126 to 225 (PSVF…KTIS), and 234 to 330 (PQVY…KTIS). N185 is a glycosylation site (N-linked (GlcNAc...) asparagine).

The protein resides in the secreted. The sequence is that of Ig gamma-2A chain C region secreted form from Mus musculus (Mouse).